The chain runs to 446 residues: Glutamyl-tRNA reductase (446 aa).

Residues 49-52, serine 108, 113-115, and glutamine 119 each bind substrate; these read TCNR and ETQ. Cysteine 50 serves as the catalytic Nucleophile. 188 to 193 is a binding site for NADP(+); it reads GAGKMS.

The protein belongs to the glutamyl-tRNA reductase family. Homodimer.

The enzyme catalyses (S)-4-amino-5-oxopentanoate + tRNA(Glu) + NADP(+) = L-glutamyl-tRNA(Glu) + NADPH + H(+). It functions in the pathway porphyrin-containing compound metabolism; protoporphyrin-IX biosynthesis; 5-aminolevulinate from L-glutamyl-tRNA(Glu): step 1/2. Its function is as follows. Catalyzes the NADPH-dependent reduction of glutamyl-tRNA(Glu) to glutamate 1-semialdehyde (GSA). The polypeptide is Glutamyl-tRNA reductase (Desulforudis audaxviator (strain MP104C)).